A 209-amino-acid polypeptide reads, in one-letter code: Large ribosomal subunit protein bL9 (209 aa).

Residues 184–209 form a disordered region; the sequence is SAASEDSDLVETPEDRATEEAEDEQP.

Belongs to the bacterial ribosomal protein bL9 family.

Its function is as follows. Binds to the 23S rRNA. The polypeptide is Large ribosomal subunit protein bL9 (Dinoroseobacter shibae (strain DSM 16493 / NCIMB 14021 / DFL 12)).